We begin with the raw amino-acid sequence, 537 residues long: CTP synthase (537 aa).

The amidoligase domain stretch occupies residues 1–269; that stretch reads MNQTKYIFVT…DKVALKKLDL (269 aa). Ser-15 contributes to the CTP binding site. Ser-15 contacts UTP. 16-21 contributes to the ATP binding site; the sequence is SLGKGI. Tyr-56 lines the L-glutamine pocket. Residue Asp-73 participates in ATP binding. Mg(2+)-binding residues include Asp-73 and Glu-143. CTP-binding positions include 150-152, 190-195, and Lys-226; these read DIE and KTKPTQ. UTP is bound by residues 190-195 and Lys-226; that span reads KTKPTQ. One can recognise a Glutamine amidotransferase type-1 domain in the interval 295–537; that stretch reads SIGLVGKYVE…IAAAVKHKNK (243 aa). Gly-357 serves as a coordination point for L-glutamine. Residue Cys-384 is the Nucleophile; for glutamine hydrolysis of the active site. L-glutamine-binding positions include 385–388, Glu-408, and Arg-465; that span reads LGMQ. Active-site residues include His-510 and Glu-512.

This sequence belongs to the CTP synthase family. As to quaternary structure, homotetramer.

The catalysed reaction is UTP + L-glutamine + ATP + H2O = CTP + L-glutamate + ADP + phosphate + 2 H(+). The enzyme catalyses L-glutamine + H2O = L-glutamate + NH4(+). It catalyses the reaction UTP + NH4(+) + ATP = CTP + ADP + phosphate + 2 H(+). The protein operates within pyrimidine metabolism; CTP biosynthesis via de novo pathway; CTP from UDP: step 2/2. With respect to regulation, allosterically activated by GTP, when glutamine is the substrate; GTP has no effect on the reaction when ammonia is the substrate. The allosteric effector GTP functions by stabilizing the protein conformation that binds the tetrahedral intermediate(s) formed during glutamine hydrolysis. Inhibited by the product CTP, via allosteric rather than competitive inhibition. Its function is as follows. Catalyzes the ATP-dependent amination of UTP to CTP with either L-glutamine or ammonia as the source of nitrogen. Regulates intracellular CTP levels through interactions with the four ribonucleotide triphosphates. This is CTP synthase from Flavobacterium psychrophilum (strain ATCC 49511 / DSM 21280 / CIP 103535 / JIP02/86).